A 104-amino-acid chain; its full sequence is Translation initiation factor 1A (104 aa).

The segment covering 1–14 (MRGQQAPPQQPTRV) has biased composition (low complexity). Residues 1–20 (MRGQQAPPQQPTRVRTPREN) form a disordered region. Residues 12 to 87 (TRVRTPRENE…EKCDVIWRYT (76 aa)) form the S1-like domain.

It belongs to the eIF-1A family.

Functionally, seems to be required for maximal rate of protein biosynthesis. Enhances ribosome dissociation into subunits and stabilizes the binding of the initiator Met-tRNA(I) to 40 S ribosomal subunits. In Methanococcus maripaludis (strain C6 / ATCC BAA-1332), this protein is Translation initiation factor 1A (eIF1A).